A 184-amino-acid polypeptide reads, in one-letter code: Tumor necrosis factor alpha-induced protein 8-like protein 2 (184 aa).

Position 3 is a phosphoserine (serine 3).

The protein belongs to the TNFAIP8 family. TNFAIP8L2 subfamily. May interact with CASP8; however, such result is unclear since could not reproduce the interaction with CASP8. Interacts with RAC1. Post-translationally, phosphorylated by TAK1/MAP3K7; this phosphorylation triggers association with BTRC and subsequent ubiquitination and degradation. Ubiquitinated in a BTRC-depdent manner; leading to degradation mediated through the proteasome pathway.

The protein resides in the cytoplasm. It localises to the nucleus. Its subcellular location is the lysosome. Functionally, acts as a negative regulator of innate and adaptive immunity by maintaining immune homeostasis. Plays a regulatory role in the Toll-like signaling pathway by determining the strength of LPS-induced signaling and gene expression. Inhibits TCR-mediated T-cell activation and negatively regulate T-cell function to prevent hyperresponsiveness. Also inhibits autolysosome formation via negatively modulating MTOR activation by interacting with RAC1 and promoting the disassociation of the RAC1-MTOR complex. Plays an essential role in NK-cell biology by acting as a checkpoint and displaying an expression pattern correlating with NK-cell maturation process and by negatively regulating NK-cell maturation and antitumor immunity. Mechanistically, suppresses IL-15-triggered mTOR activity in NK-cells. The polypeptide is Tumor necrosis factor alpha-induced protein 8-like protein 2 (TNFAIP8L2) (Oryctolagus cuniculus (Rabbit)).